Consider the following 1110-residue polypeptide: Nonribisomal peptide synthetase benY (1110 aa).

Positions 47–443 (RALEFPEKIA…GRKDHQLKVR (397 aa)) are adenylation. The Carrier domain occupies 575 to 651 (TLETESEKIL…EMAQSARVVP (77 aa)). Serine 612 is modified (O-(pantetheine 4'-phosphoryl)serine). Residues 713–1025 (YILDGDVDFD…IFHHQNIDTK (313 aa)) are condensation.

This sequence belongs to the NRP synthetase family.

It functions in the pathway secondary metabolite biosynthesis. Functionally, nonribisomal peptide synthetase; part of the gene cluster that mediates the biosynthesis of benzomalvin A and D. The pathway begins with the loading of amino acid precursors onto the A domains of the non ribosomal peptide synthetases benY and benZ. BenY and the A1 domain of benZ are loaded with anthranilate (Anth), while the A2 domain of benZ is loaded with phenylalanine (Phe). N-methylation of Phe by the methyltransferase benX may happen before loading of Phe onto benZ, after loading of Phe, or after dipeptide formation. Condensation of Anth with the secondary amine of NmPhe or Phe is catalyzed by the C1 domain of benZ, forming a dipeptide intermediate. This is followed by in trans condensation of the Anth-NmPhe dipeptide with Anth bound to the T domain of benY by the C2 domain of benZ to form the linear tripeptide Anth-NmPhe-Anth. Cyclization and release of the tripeptide is then catalyzed by the C-terminal C domain of benY and the resulting 11-member macrocyclic intermediate is expected to spontaneously collapse to form the benzodiazepine core. Benzomalvin A is in conformational equilibrium with its atropisomer, benzomalvin D. The sequence is that of Nonribisomal peptide synthetase benY from Aspergillus terreus.